The sequence spans 285 residues: Glutamate racemase (285 aa).

Residues 28 to 29 (DS) and 60 to 61 (YG) contribute to the substrate site. The Proton donor/acceptor role is filled by Cys-92. 93–94 (NT) contacts substrate. The active-site Proton donor/acceptor is Cys-204. 205–206 (TH) contacts substrate.

Belongs to the aspartate/glutamate racemases family.

It carries out the reaction L-glutamate = D-glutamate. The protein operates within cell wall biogenesis; peptidoglycan biosynthesis. In terms of biological role, provides the (R)-glutamate required for cell wall biosynthesis. The polypeptide is Glutamate racemase (Escherichia coli O9:H4 (strain HS)).